Reading from the N-terminus, the 230-residue chain is Cytidylate kinase (230 aa).

10–18 (GPAGSGKST) serves as a coordination point for ATP.

The protein belongs to the cytidylate kinase family. Type 1 subfamily.

The protein resides in the cytoplasm. The catalysed reaction is CMP + ATP = CDP + ADP. It catalyses the reaction dCMP + ATP = dCDP + ADP. The polypeptide is Cytidylate kinase (Leptospira borgpetersenii serovar Hardjo-bovis (strain JB197)).